The chain runs to 199 residues: dITP/XTP pyrophosphatase (199 aa).

Residue 12–17 (SGNAGK) participates in substrate binding. Asp-73 acts as the Proton acceptor in catalysis. A Mg(2+)-binding site is contributed by Asp-73. Substrate is bound by residues Ser-74, 157–160 (FGYD), Lys-180, and 185–186 (HR).

It belongs to the HAM1 NTPase family. Homodimer. It depends on Mg(2+) as a cofactor.

The catalysed reaction is XTP + H2O = XMP + diphosphate + H(+). It catalyses the reaction dITP + H2O = dIMP + diphosphate + H(+). The enzyme catalyses ITP + H2O = IMP + diphosphate + H(+). Its function is as follows. Pyrophosphatase that catalyzes the hydrolysis of nucleoside triphosphates to their monophosphate derivatives, with a high preference for the non-canonical purine nucleotides XTP (xanthosine triphosphate), dITP (deoxyinosine triphosphate) and ITP. Seems to function as a house-cleaning enzyme that removes non-canonical purine nucleotides from the nucleotide pool, thus preventing their incorporation into DNA/RNA and avoiding chromosomal lesions. This Neisseria meningitidis serogroup A / serotype 4A (strain DSM 15465 / Z2491) protein is dITP/XTP pyrophosphatase.